We begin with the raw amino-acid sequence, 309 residues long: Ribose-phosphate pyrophosphokinase (309 aa).

ATP is bound by residues 37-39 (DGE) and 96-97 (RQ). The Mg(2+) site is built by H130 and D169. K192 is an active-site residue. Residues R194, D218, and 222 to 226 (DTAGT) each bind D-ribose 5-phosphate.

Belongs to the ribose-phosphate pyrophosphokinase family. Class I subfamily. As to quaternary structure, homohexamer. It depends on Mg(2+) as a cofactor.

Its subcellular location is the cytoplasm. The enzyme catalyses D-ribose 5-phosphate + ATP = 5-phospho-alpha-D-ribose 1-diphosphate + AMP + H(+). It participates in metabolic intermediate biosynthesis; 5-phospho-alpha-D-ribose 1-diphosphate biosynthesis; 5-phospho-alpha-D-ribose 1-diphosphate from D-ribose 5-phosphate (route I): step 1/1. Functionally, involved in the biosynthesis of the central metabolite phospho-alpha-D-ribosyl-1-pyrophosphate (PRPP) via the transfer of pyrophosphoryl group from ATP to 1-hydroxyl of ribose-5-phosphate (Rib-5-P). The sequence is that of Ribose-phosphate pyrophosphokinase from Wolinella succinogenes (strain ATCC 29543 / DSM 1740 / CCUG 13145 / JCM 31913 / LMG 7466 / NCTC 11488 / FDC 602W) (Vibrio succinogenes).